The sequence spans 136 residues: MSSVESSPISRYEDEVFPLSFSNVAFEPPMLSHSPDRSTYADDFSQSYQQELLTFPLSYPIVDESECTHTKDKTDSNIITSTEDDCMFDMEFNGNAASAVAAASKESNSASGFAFASNDAFANVAQQNYRLWLSSV.

The interval Gln-127–Val-136 is ATG9-binding.

In terms of assembly, interacts with ATG9.

It is found in the preautophagosomal structure membrane. In terms of biological role, involved in both selective and non-selective autophagy. Does not appear to play a role in determining the size of autophagosomes, but rather influences their formation rate. With ATG9, plays a role in the delivery of donor membrane to expanding phagophore. This Saccharomyces cerevisiae (strain ATCC 204508 / S288c) (Baker's yeast) protein is Autophagy-related protein 41.